The sequence spans 273 residues: WAP four-disulfide core domain protein 8 (273 aa).

Residues 45–65 form a helical membrane-spanning segment; that stretch reads LAHSWWSGALLLLLLFLFLSL. The WAP 1 domain maps to 76-123; sequence IKQKVGECPRQRLECRNESLSSCKTDFNCKAHFKCCQFACGRKCMDPY. 15 disulfide bridges follow: Cys-83–Cys-111, Cys-90–Cys-115, Cys-98–Cys-110, Cys-104–Cys-119, Cys-127–Cys-177, Cys-136–Cys-160, Cys-152–Cys-173, Cys-186–Cys-214, Cys-197–Cys-218, Cys-201–Cys-213, Cys-207–Cys-222, Cys-233–Cys-261, Cys-240–Cys-264, Cys-248–Cys-260, and Cys-254–Cys-268. The 51-residue stretch at 127–177 folds into the BPTI/Kunitz inhibitor domain; it reads CMLPSDKGNCQDILTRWYFDSQKHQCRAFLYSGCRGNANNFLTKTDCRNAC. WAP domains follow at residues 179–226 and 228–272; these read FVEK…ARVW and VKTG…LKPR.

Its subcellular location is the membrane. The protein is WAP four-disulfide core domain protein 8 (Wfdc8) of Mus musculus (Mouse).